The primary structure comprises 101 residues: Aspartyl/glutamyl-tRNA(Asn/Gln) amidotransferase subunit C (101 aa).

The tract at residues 75 to 101 (QEALSGAPDAEEQRFRVPRILDEDVAS) is disordered. Basic and acidic residues predominate over residues 85–101 (EEQRFRVPRILDEDVAS).

Belongs to the GatC family. Heterotrimer of A, B and C subunits.

The catalysed reaction is L-glutamyl-tRNA(Gln) + L-glutamine + ATP + H2O = L-glutaminyl-tRNA(Gln) + L-glutamate + ADP + phosphate + H(+). It carries out the reaction L-aspartyl-tRNA(Asn) + L-glutamine + ATP + H2O = L-asparaginyl-tRNA(Asn) + L-glutamate + ADP + phosphate + 2 H(+). Its function is as follows. Allows the formation of correctly charged Asn-tRNA(Asn) or Gln-tRNA(Gln) through the transamidation of misacylated Asp-tRNA(Asn) or Glu-tRNA(Gln) in organisms which lack either or both of asparaginyl-tRNA or glutaminyl-tRNA synthetases. The reaction takes place in the presence of glutamine and ATP through an activated phospho-Asp-tRNA(Asn) or phospho-Glu-tRNA(Gln). This Salinispora arenicola (strain CNS-205) protein is Aspartyl/glutamyl-tRNA(Asn/Gln) amidotransferase subunit C.